The primary structure comprises 213 residues: MSSLAFRTLRNGLGLKSSVRALSTTTTTLSNYQQPDYSSYLNNKSGQGSRNFTYFMVGSMGLLSAAGAKSTVEAFLSSFAASADVLAMAKVEVKLGAIPEGKNVIIKWQGKPVFIRHRTADEIEEANQVDIKTLRDPQNDADRVKKPEWLIMLGICTHLGCVPIGEAGDFGGWFCPCHGSHYDISGRIRKGPAPLNLEIPEYDFTDDETLLVG.

A mitochondrion-targeting transit peptide spans 1–29; it reads MSSLAFRTLRNGLGLKSSVRALSTTTTTL. Over 30 to 47 the chain is Mitochondrial matrix; that stretch reads SNYQQPDYSSYLNNKSGQ. The chain crosses the membrane as a helical span at residues 48 to 77; sequence GSRNFTYFMVGSMGLLSAAGAKSTVEAFLS. Residues 78–213 lie on the Mitochondrial intermembrane side of the membrane; that stretch reads SFAASADVLA…FTDDETLLVG (136 aa). One can recognise a Rieske domain in the interval 116-211; it reads RHRTADEIEE…YDFTDDETLL (96 aa). C156, H158, C175, and H178 together coordinate [2Fe-2S] cluster. A disulfide bridge connects residues C161 and C177.

This sequence belongs to the Rieske iron-sulfur protein family. In terms of assembly, component of the ubiquinol-cytochrome c oxidoreductase (cytochrome b-c1 complex, complex III, CIII), a multisubunit enzyme composed of 10 subunits. The complex is composed of 3 respiratory subunits cytochrome b (COB), cytochrome c1 (CYT1) and Rieske protein (RIP1), 2 core protein subunits COR1 and QCR2, and 5 low-molecular weight protein subunits QCR6, QCR7, QCR8, QCR9 and QCR10. The complex exists as an obligatory dimer and forms supercomplexes (SCs) in the inner mitochondrial membrane with a monomer or a dimer of cytochrome c oxidase (complex IV, CIV), resulting in 2 different assemblies (supercomplexes III(2)IV and III(2)IV(2)). Requires [2Fe-2S] cluster as cofactor.

The protein resides in the mitochondrion inner membrane. It carries out the reaction a quinol + 2 Fe(III)-[cytochrome c](out) = a quinone + 2 Fe(II)-[cytochrome c](out) + 2 H(+)(out). Component of the ubiquinol-cytochrome c oxidoreductase, a multisubunit transmembrane complex that is part of the mitochondrial electron transport chain which drives oxidative phosphorylation. The complex plays an important role in the uptake of multiple carbon sources present in different host niches. This is Cytochrome b-c1 complex subunit Rieske, mitochondrial from Candida albicans (strain SC5314 / ATCC MYA-2876) (Yeast).